An 884-amino-acid chain; its full sequence is Alanine--tRNA ligase (884 aa).

Residues His-572, His-576, Cys-673, and His-677 each contribute to the Zn(2+) site.

The protein belongs to the class-II aminoacyl-tRNA synthetase family. Zn(2+) serves as cofactor.

It is found in the cytoplasm. The enzyme catalyses tRNA(Ala) + L-alanine + ATP = L-alanyl-tRNA(Ala) + AMP + diphosphate. Its function is as follows. Catalyzes the attachment of alanine to tRNA(Ala) in a two-step reaction: alanine is first activated by ATP to form Ala-AMP and then transferred to the acceptor end of tRNA(Ala). Also edits incorrectly charged Ser-tRNA(Ala) and Gly-tRNA(Ala) via its editing domain. The polypeptide is Alanine--tRNA ligase (Xylella fastidiosa (strain 9a5c)).